The sequence spans 546 residues: Chaperonin GroEL (546 aa).

Residues 30 to 33 (TLGP), 87 to 91 (DGTTT), Gly-414, 477 to 479 (NAL), and Asp-493 contribute to the ATP site.

Belongs to the chaperonin (HSP60) family. As to quaternary structure, forms a cylinder of 14 subunits composed of two heptameric rings stacked back-to-back. Interacts with the co-chaperonin GroES.

It is found in the cytoplasm. The enzyme catalyses ATP + H2O + a folded polypeptide = ADP + phosphate + an unfolded polypeptide.. Together with its co-chaperonin GroES, plays an essential role in assisting protein folding. The GroEL-GroES system forms a nano-cage that allows encapsulation of the non-native substrate proteins and provides a physical environment optimized to promote and accelerate protein folding. This Syntrophomonas wolfei subsp. wolfei (strain DSM 2245B / Goettingen) protein is Chaperonin GroEL.